Reading from the N-terminus, the 79-residue chain is MRQRGQEHLPTSVKSEPRACNNPTVAENRRVPSGLAAVIRNLTALWNPSLGVSERRGGDWEPSRIPRLWARVGWIQLPG.

The segment at 1 to 27 (MRQRGQEHLPTSVKSEPRACNNPTVAE) is disordered.

This is an uncharacterized protein from Homo sapiens (Human).